We begin with the raw amino-acid sequence, 262 residues long: Phenylalanine-4-hydroxylase (262 aa).

The Fe cation site is built by histidine 121, histidine 126, and glutamate 166.

It belongs to the biopterin-dependent aromatic amino acid hydroxylase family. Monomer. Fe(2+) serves as cofactor.

The catalysed reaction is (6R)-L-erythro-5,6,7,8-tetrahydrobiopterin + L-phenylalanine + O2 = (4aS,6R)-4a-hydroxy-L-erythro-5,6,7,8-tetrahydrobiopterin + L-tyrosine. The protein operates within amino-acid degradation; L-phenylalanine degradation; acetoacetate and fumarate from L-phenylalanine: step 1/6. This Pseudomonas aeruginosa (strain ATCC 15692 / DSM 22644 / CIP 104116 / JCM 14847 / LMG 12228 / 1C / PRS 101 / PAO1) protein is Phenylalanine-4-hydroxylase (phhA).